The primary structure comprises 162 residues: 2-C-methyl-D-erythritol 2,4-cyclodiphosphate synthase (162 aa).

Positions 10 and 12 each coordinate a divalent metal cation. Residues 10 to 12 (DVH) and 36 to 37 (HS) contribute to the 4-CDP-2-C-methyl-D-erythritol 2-phosphate site. His-44 contributes to the a divalent metal cation binding site. 4-CDP-2-C-methyl-D-erythritol 2-phosphate-binding positions include 58-60 (DIG), 63-67 (FPDTD), and Arg-144.

It belongs to the IspF family. In terms of assembly, homotrimer. The cofactor is a divalent metal cation.

The catalysed reaction is 4-CDP-2-C-methyl-D-erythritol 2-phosphate = 2-C-methyl-D-erythritol 2,4-cyclic diphosphate + CMP. Its pathway is isoprenoid biosynthesis; isopentenyl diphosphate biosynthesis via DXP pathway; isopentenyl diphosphate from 1-deoxy-D-xylulose 5-phosphate: step 4/6. Functionally, involved in the biosynthesis of isopentenyl diphosphate (IPP) and dimethylallyl diphosphate (DMAPP), two major building blocks of isoprenoid compounds. Catalyzes the conversion of 4-diphosphocytidyl-2-C-methyl-D-erythritol 2-phosphate (CDP-ME2P) to 2-C-methyl-D-erythritol 2,4-cyclodiphosphate (ME-CPP) with a corresponding release of cytidine 5-monophosphate (CMP). This Laribacter hongkongensis (strain HLHK9) protein is 2-C-methyl-D-erythritol 2,4-cyclodiphosphate synthase.